A 182-amino-acid polypeptide reads, in one-letter code: MVKALLVGSKVLVPSIDESRYLYSNGFYGKPIGISKPKGPKDIVRPLELSLIESVYLTKKGLINVVDKNGDLLEYKKLYEYSAMKINKFEILYKVYEDLREKGFIVRSGVKYGADFAVYTLGPGLEHAPYVVIAVDIDEEITPHELLSFGRVSHSTKKRLVLALVDRKSEGIRYIMFKWVKM.

Catalysis depends on residues Tyr119, His127, and Lys158.

It belongs to the tRNA-intron endonuclease family. Archaeal short subfamily. As to quaternary structure, homotetramer; although the tetramer contains four active sites, only two participate in the cleavage. Therefore, it should be considered as a dimer of dimers.

The enzyme catalyses pretRNA = a 3'-half-tRNA molecule with a 5'-OH end + a 5'-half-tRNA molecule with a 2',3'-cyclic phosphate end + an intron with a 2',3'-cyclic phosphate and a 5'-hydroxyl terminus.. Endonuclease that removes tRNA introns. Cleaves pre-tRNA at the 5'- and 3'-splice sites to release the intron. The products are an intron and two tRNA half-molecules bearing 2',3' cyclic phosphate and 5'-OH termini. Recognizes a pseudosymmetric substrate in which 2 bulged loops of 3 bases are separated by a stem of 4 bp. The sequence is that of tRNA-splicing endonuclease from Saccharolobus solfataricus (strain ATCC 35092 / DSM 1617 / JCM 11322 / P2) (Sulfolobus solfataricus).